Consider the following 1486-residue polypeptide: Chromosome partition protein MukB (1486 aa).

Residue 34–41 participates in ATP binding; sequence GGNGAGKS. Coiled-coil stretches lie at residues 326–418, 444–480, and 509–603; these read LEAD…QYNQ, LETF…QAYQ, and RHLA…RAPV. The interval 666–783 is flexible hinge; sequence PGGSEDQRLN…EVPLFGRAAR (118 aa). 3 coiled-coil regions span residues 835 to 923, 977 to 1115, and 1209 to 1265; these read EAEI…AKLE, EMLS…TAKA, and VEAI…LQSV.

It belongs to the SMC family. MukB subfamily. In terms of assembly, homodimerization via its hinge domain. Binds to DNA via its C-terminal region. Interacts, and probably forms a ternary complex, with MukE and MukF via its C-terminal region. The complex formation is stimulated by calcium or magnesium. Interacts with tubulin-related protein FtsZ.

It localises to the cytoplasm. Its subcellular location is the nucleoid. Functionally, plays a central role in chromosome condensation, segregation and cell cycle progression. Functions as a homodimer, which is essential for chromosome partition. Involved in negative DNA supercoiling in vivo, and by this means organize and compact chromosomes. May achieve or facilitate chromosome segregation by condensation DNA from both sides of a centrally located replisome during cell division. This is Chromosome partition protein MukB from Escherichia coli O7:K1 (strain IAI39 / ExPEC).